A 132-amino-acid chain; its full sequence is Large ribosomal subunit protein bL21 (132 aa).

Residues 111-132 (AAEKPARKPRAKKTNEVTTDGA) are disordered.

The protein belongs to the bacterial ribosomal protein bL21 family. As to quaternary structure, part of the 50S ribosomal subunit. Contacts protein L20.

Its function is as follows. This protein binds to 23S rRNA in the presence of protein L20. This Dehalococcoides mccartyi (strain CBDB1) protein is Large ribosomal subunit protein bL21.